A 359-amino-acid chain; its full sequence is DNA polymerase IV (359 aa).

A UmuC domain is found at 4–185 (IIHIDMDCYF…LPLSKIPGVG (182 aa)). Residues aspartate 8 and aspartate 103 each contribute to the Mg(2+) site. The active site involves glutamate 104.

The protein belongs to the DNA polymerase type-Y family. In terms of assembly, monomer. Mg(2+) serves as cofactor.

It is found in the cytoplasm. The enzyme catalyses DNA(n) + a 2'-deoxyribonucleoside 5'-triphosphate = DNA(n+1) + diphosphate. In terms of biological role, poorly processive, error-prone DNA polymerase involved in untargeted mutagenesis. Copies undamaged DNA at stalled replication forks, which arise in vivo from mismatched or misaligned primer ends. These misaligned primers can be extended by PolIV. Exhibits no 3'-5' exonuclease (proofreading) activity. May be involved in translesional synthesis, in conjunction with the beta clamp from PolIII. The protein is DNA polymerase IV of Shewanella frigidimarina (strain NCIMB 400).